The chain runs to 449 residues: Cytochrome P450 monooxygenase iliC (449 aa).

Residues 28–44 form a helical membrane-spanning segment; it reads TFAITFMGVKQICTIEG. Residue C397 participates in heme binding.

It belongs to the cytochrome P450 family. The cofactor is heme.

Its subcellular location is the membrane. The enzyme catalyses (3E,5S)-3-[(2E,4E,8S,10E,12Z)-1-hydroxy-4,8-dimethyltetradeca-2,4,10,12-tetraen-1-ylidene]-5-[(4-hydroxyphenyl)methyl]pyrrolidine-2,4-dione + reduced [NADPH--hemoprotein reductase] + O2 = 3-[(2E,4E,8S,10E,12Z)-4,8-dimethyltetradeca-2,4,10,12-tetraenoyl]-4-hydroxy-5-(4-hydroxyphenyl)-1,2-dihydropyridin-2-one + oxidized [NADPH--hemoprotein reductase] + 2 H2O. It participates in mycotoxin biosynthesis. Cytochrome P450 monooxygenase; part of the gene cluster that mediates the biosynthesis of ilicicolin H, a 4-hydroxy-2-pyridonealkaloid that has potent and broad antifungal activities by inhibiting the mitochondrial respiration chain. IliC catalyzes the ring expansion of the tetramate intermediate to the acyclic 2-pyridone intermediate that contains the trans bis-diene chain. The biosynthesis of ilicicolin H starts with formation of the tetramic acid by the hybrid PKS-NRPS synthetase iliA with the partnering trans-enoyl reductase iliB since iliA lacks a designated enoylreductase (ER) domain. The cytochrome P450 monooxygenase iliC then catalyzes the ring expansion of the tetramate to the acyclic 2-pyridone. The pericyclase iliD further converts the acyclic 2-pyridone into 8-epi-ilicicolin H. 8-epi-ilicicolin H might then spontaneously convert to ilicicolin H since ilicicolin H is produced in the absence of the epimerase iliE, in contrast to what was observed for the Talaromyces variabilis ilicolin H biosynthetic pathway. The protein is Cytochrome P450 monooxygenase iliC of Hypocrea jecorina (strain QM6a) (Trichoderma reesei).